The chain runs to 435 residues: Gap junction alpha-3 protein (435 aa).

Residues 2–15 lie within the membrane without spanning it; the sequence is GDWSFLGRLLENAQ. The Cytoplasmic segment spans residues 16–19; that stretch reads EHST. The helical transmembrane segment at 20 to 40 threads the bilayer; that stretch reads VIGKVWLTVLFIFRILVLGAA. The Extracellular segment spans residues 41–71; sequence AEDVWGDEQSDFTCNTQQPGCENVCYDRAFP. Intrachain disulfides connect Cys-54–Cys-192, Cys-61–Cys-186, and Cys-65–Cys-181. A helical transmembrane segment spans residues 72 to 92; the sequence is ISHIRFWALQIIFVSTPTLIY. Topologically, residues 93-152 are cytoplasmic; that stretch reads LGHVLHIVRMEEKKKEREEEEQLKRESPSPKEPPQDNPSSRDDRGRVRMAGALLRTYVFN. Residues 108–121 show a composition bias toward basic and acidic residues; it reads EREEEEQLKRESPS. Positions 108–136 are disordered; the sequence is EREEEEQLKRESPSPKEPPQDNPSSRDDR. A helical membrane pass occupies residues 153–173; sequence IIFKTLFEVGFIAGQYFLYGF. Residues 174 to 201 are Extracellular-facing; it reads ELKPLYRCDRWPCPNTVDCFISRPTEKT. Residues 202–222 traverse the membrane as a helical segment; the sequence is IFIIFMLAVACASLLLNMLEI. Over 223–435 the chain is Cytoplasmic; sequence YHLGWKKLKQ…GRARPEDLAI (213 aa). A disordered region spans residues 332 to 435; sequence AAERQPPALK…GRARPEDLAI (104 aa). Composition is skewed to low complexity over residues 342–389 and 415–427; these read AYPA…ALAG and GRAS…SSGR.

The protein belongs to the connexin family. Alpha-type (group II) subfamily. A hemichannel or connexon is composed of a hexamer of connexins. A functional gap junction is formed by the apposition of two hemichannels. Forms heteromeric channels with GJA8.

It localises to the cell membrane. It is found in the cell junction. The protein localises to the gap junction. Its function is as follows. Structural component of lens fiber gap junctions. Gap junctions are dodecameric channels that connect the cytoplasm of adjoining cells. They are formed by the docking of two hexameric hemichannels, one from each cell membrane. Small molecules and ions diffuse from one cell to a neighboring cell via the central pore. The chain is Gap junction alpha-3 protein (GJA3) from Homo sapiens (Human).